The following is a 79-amino-acid chain: Mipartoxin-3 (79 aa).

The N-terminal stretch at 1 to 21 is a signal peptide; it reads MKTLLLTLVVVTIVCLDLGNS. Disulfide bonds link cysteine 24-cysteine 41, cysteine 34-cysteine 59, cysteine 63-cysteine 71, and cysteine 72-cysteine 77.

Belongs to the three-finger toxin family. Short-chain subfamily. In terms of tissue distribution, expressed by the venom gland.

It is found in the secreted. Snake venom neurotoxin that blocks neuromuscular transmission, presenting a postsynaptic action through the nicotinic acetylcholine receptor (nAChR). Has no cytotoxic activity. This is Mipartoxin-3 from Micrurus mipartitus (Red-tailed coral snake).